A 118-amino-acid chain; its full sequence is Group 1 truncated hemoglobin GlbN (118 aa).

Histidine 70 lines the heme pocket.

This sequence belongs to the truncated hemoglobin family. Group I subfamily. As to quaternary structure, monomer. It depends on heme as a cofactor.

It is found in the membrane. In Nostoc commune, this protein is Group 1 truncated hemoglobin GlbN (glbN).